Here is a 145-residue protein sequence, read N- to C-terminus: 3-hydroxyacyl-[acyl-carrier-protein] dehydratase FabZ (145 aa).

H47 is a catalytic residue.

The protein belongs to the thioester dehydratase family. FabZ subfamily.

Its subcellular location is the cytoplasm. The catalysed reaction is a (3R)-hydroxyacyl-[ACP] = a (2E)-enoyl-[ACP] + H2O. Functionally, involved in unsaturated fatty acids biosynthesis. Catalyzes the dehydration of short chain beta-hydroxyacyl-ACPs and long chain saturated and unsaturated beta-hydroxyacyl-ACPs. The protein is 3-hydroxyacyl-[acyl-carrier-protein] dehydratase FabZ of Methylobacillus flagellatus (strain ATCC 51484 / DSM 6875 / VKM B-1610 / KT).